A 309-amino-acid polypeptide reads, in one-letter code: Aspartate carbamoyltransferase catalytic subunit (309 aa).

Positions 56 and 57 each coordinate carbamoyl phosphate. An L-aspartate-binding site is contributed by K84. Positions 106, 136, and 139 each coordinate carbamoyl phosphate. L-aspartate is bound by residues R169 and R221. 2 residues coordinate carbamoyl phosphate: A264 and P265.

Belongs to the aspartate/ornithine carbamoyltransferase superfamily. ATCase family. Heterododecamer (2C3:3R2) of six catalytic PyrB chains organized as two trimers (C3), and six regulatory PyrI chains organized as three dimers (R2).

It catalyses the reaction carbamoyl phosphate + L-aspartate = N-carbamoyl-L-aspartate + phosphate + H(+). Its pathway is pyrimidine metabolism; UMP biosynthesis via de novo pathway; (S)-dihydroorotate from bicarbonate: step 2/3. Catalyzes the condensation of carbamoyl phosphate and aspartate to form carbamoyl aspartate and inorganic phosphate, the committed step in the de novo pyrimidine nucleotide biosynthesis pathway. The sequence is that of Aspartate carbamoyltransferase catalytic subunit from Limosilactobacillus reuteri subsp. reuteri (strain JCM 1112) (Lactobacillus reuteri).